A 148-amino-acid polypeptide reads, in one-letter code: Large ribosomal subunit protein bL9 (148 aa).

It belongs to the bacterial ribosomal protein bL9 family.

In terms of biological role, binds to the 23S rRNA. The protein is Large ribosomal subunit protein bL9 of Salinispora tropica (strain ATCC BAA-916 / DSM 44818 / JCM 13857 / NBRC 105044 / CNB-440).